The chain runs to 404 residues: MEELKLNTIEEAIADFREGKFVIVVDDEDRENEGDLIVAAEKITPEQVNFMLKHARGVLCAPITISRCKELELPHQVDTNTSVLGTPFTVTVDKLEGCSTGVSIHDRAATIRALADPTSTPETFGRPGHVNPLYAQDKGVLRRAGHTEACIDMARLAGLYPAAALMEIMSEDGTMARLPELRKMADEWGLKLISIRDLIAYRLKQESLVEKGVEVDMPTEYGHFRLIPFRQKSNGLEHIAIIKGDIKEGEPVLVRVHSSCATGDIFGSMRCDCGEQLHKALQMIEKEGKGAVVYLNQEGRGIGLMEKMKAYKLQENGVDTVEANILLGHQADERDYGVGAQILRSIGVTQMRLLTNNPVKRVGLESYGLSIVENVPIEITPNKYNERYLKTKKDRMGHTLHFNK.

Residues 1 to 204 (MEELKLNTIE…IRDLIAYRLK (204 aa)) form a DHBP synthase region. D-ribulose 5-phosphate contacts are provided by residues 30–31 (RE), aspartate 35, 143–147 (RAGHT), and glutamate 167. Glutamate 31 is a Mg(2+) binding site. Position 146 (histidine 146) interacts with Mg(2+). A GTP cyclohydrolase II region spans residues 205-404 (QESLVEKGVE…RMGHTLHFNK (200 aa)). 255 to 259 (RVHSS) is a GTP binding site. Zn(2+) is bound by residues cysteine 260, cysteine 271, and cysteine 273. Residues glutamine 276, 298-300 (EGR), and threonine 320 contribute to the GTP site. The active-site Proton acceptor; for GTP cyclohydrolase activity is aspartate 332. Residue arginine 334 is the Nucleophile; for GTP cyclohydrolase activity of the active site. GTP is bound by residues threonine 355 and lysine 360.

It in the N-terminal section; belongs to the DHBP synthase family. The protein in the C-terminal section; belongs to the GTP cyclohydrolase II family. Requires Mg(2+) as cofactor. The cofactor is Mn(2+). It depends on Zn(2+) as a cofactor.

It carries out the reaction D-ribulose 5-phosphate = (2S)-2-hydroxy-3-oxobutyl phosphate + formate + H(+). The catalysed reaction is GTP + 4 H2O = 2,5-diamino-6-hydroxy-4-(5-phosphoribosylamino)-pyrimidine + formate + 2 phosphate + 3 H(+). Its pathway is cofactor biosynthesis; riboflavin biosynthesis; 2-hydroxy-3-oxobutyl phosphate from D-ribulose 5-phosphate: step 1/1. It functions in the pathway cofactor biosynthesis; riboflavin biosynthesis; 5-amino-6-(D-ribitylamino)uracil from GTP: step 1/4. In terms of biological role, catalyzes the conversion of D-ribulose 5-phosphate to formate and 3,4-dihydroxy-2-butanone 4-phosphate. Functionally, catalyzes the conversion of GTP to 2,5-diamino-6-ribosylamino-4(3H)-pyrimidinone 5'-phosphate (DARP), formate and pyrophosphate. The polypeptide is Riboflavin biosynthesis protein RibBA (Phocaeicola vulgatus (strain ATCC 8482 / DSM 1447 / JCM 5826 / CCUG 4940 / NBRC 14291 / NCTC 11154) (Bacteroides vulgatus)).